Here is a 409-residue protein sequence, read N- to C-terminus: Astacin-like metalloendopeptidase (409 aa).

The N-terminal stretch at 1-19 is a signal peptide; the sequence is MDLKMLLIFIAFLLPSVLG. Low complexity predominate over residues 30 to 39; the sequence is TATTESTQVT. Positions 30-54 are disordered; it reads TATTESTQVTTEEDIYDSPSPAETD. Residues 87-285 form the Peptidase M12A domain; sequence SAINCRNCYW…AKINRLYNCS (199 aa). Disulfide bonds link cysteine 91–cysteine 94, cysteine 134–cysteine 284, cysteine 155–cysteine 175, cysteine 287–cysteine 313, and cysteine 339–cysteine 362. Histidine 183 is a Zn(2+) binding site. Glutamate 184 is an active-site residue. Zn(2+) is bound by residues histidine 187 and histidine 193. The region spanning 287 to 399 is the CUB domain; the sequence is CSTIIDAAFG…SGFQATFTSA (113 aa).

Zn(2+) serves as cofactor. Expressed in ovary and gonads.

It is found in the cytoplasm. The protein localises to the cell membrane. The protein resides in the cytoplasmic vesicle. Its subcellular location is the secretory vesicle. It localises to the cortical granule. In terms of biological role, probable oocyte-specific oolemmal receptor involved in sperm and egg adhesion and fertilization. May act as a protease. The protein is Astacin-like metalloendopeptidase (ASTL) of Gallus gallus (Chicken).